Reading from the N-terminus, the 366-residue chain is Beta sliding clamp (366 aa).

The protein belongs to the beta sliding clamp family. In terms of assembly, forms a ring-shaped head-to-tail homodimer around DNA which binds and tethers DNA polymerases and other proteins to the DNA. The DNA replisome complex has a single clamp-loading complex (3 tau and 1 each of delta, delta', psi and chi subunits) which binds 3 Pol III cores (1 core on the leading strand and 2 on the lagging strand) each with a beta sliding clamp dimer. Additional proteins in the replisome are other copies of gamma, psi and chi, Ssb, DNA helicase and RNA primase.

The protein localises to the cytoplasm. Confers DNA tethering and processivity to DNA polymerases and other proteins. Acts as a clamp, forming a ring around DNA (a reaction catalyzed by the clamp-loading complex) which diffuses in an ATP-independent manner freely and bidirectionally along dsDNA. Initially characterized for its ability to contact the catalytic subunit of DNA polymerase III (Pol III), a complex, multichain enzyme responsible for most of the replicative synthesis in bacteria; Pol III exhibits 3'-5' exonuclease proofreading activity. The beta chain is required for initiation of replication as well as for processivity of DNA replication. The sequence is that of Beta sliding clamp (dnaN) from Buchnera aphidicola subsp. Acyrthosiphon pisum (strain APS) (Acyrthosiphon pisum symbiotic bacterium).